We begin with the raw amino-acid sequence, 538 residues long: Zinc finger protein with KRAB and SCAN domains 3 (538 aa).

Phosphoserine is present on Ser42. Residues 46-128 (RERFRGFRYP…VLLEYLERQL (83 aa)) form the SCAN box domain. Lys171 is covalently cross-linked (Glycyl lysine isopeptide (Lys-Gly) (interchain with G-Cter in SUMO2)). Residue Thr207 is modified to Phosphothreonine. Residues 214 to 274 (LKVEDVALTL…PAEELPEKEH (61 aa)) enclose the KRAB domain. The segment covering 226–236 (EWTQQDSSQGN) has biased composition (polar residues). Positions 226–274 (EWTQQDSSQGNLCRDEKQENHGSLVSLGDEKQTKSRDLPPAEELPEKEH) are disordered. Basic and acidic residues predominate over residues 253–274 (GDEKQTKSRDLPPAEELPEKEH). 5 C2H2-type zinc fingers span residues 314–336 (HICHECGKSFAQSSGLSKHRRIH), 342–364 (YECEECGKAFIGSSALVIHQRVH), 370–392 (YECEECGKAFSHSSDLIKHQRTH), 398–420 (YECDDCGKTFSQSCSLLEHHRIH), and 426–448 (YQCSMCGKAFRRSSHLLRHQRIH). A Phosphothreonine modification is found at Thr449. 2 consecutive C2H2-type zinc fingers follow at residues 480–502 (YKCNECERSFTQNTGLIEHQKIH) and 508–530 (YQCNACGKGFTRISYLVQHQRSH).

It belongs to the krueppel C2H2-type zinc-finger protein family.

It localises to the nucleus. Its subcellular location is the cytoplasm. Transcriptional factor that binds to the consensus sequence 5'-[GT][AG][AGT]GGGG-3' and acts as a repressor of autophagy. Specifically represses expression of genes involved in autophagy and lysosome biogenesis/function such as MAP1LC3B, ULK1 or WIPI2. Associates with chromatin at the ITGB4 and VEGF promoters. Also acts as a transcription activator and promotes cancer cell progression and/or migration in various tumors and myelomas. The chain is Zinc finger protein with KRAB and SCAN domains 3 (ZKSCAN3) from Homo sapiens (Human).